Consider the following 392-residue polypeptide: L-rhamnonate dehydratase (392 aa).

The substrate site is built by H22 and R48. Mg(2+) contacts are provided by D214, E240, and E268. Catalysis depends on H318, which acts as the Proton acceptor. E338 contributes to the substrate binding site.

It belongs to the mandelate racemase/muconate lactonizing enzyme family. RhamD subfamily. In terms of assembly, homooctamer; tetramer of dimers. Requires Mg(2+) as cofactor.

The catalysed reaction is L-rhamnonate = 2-dehydro-3-deoxy-L-rhamnonate + H2O. Its function is as follows. Catalyzes the dehydration of L-rhamnonate to 2-keto-3-deoxy-L-rhamnonate (KDR). In Burkholderia cenocepacia (strain HI2424), this protein is L-rhamnonate dehydratase.